We begin with the raw amino-acid sequence, 133 residues long: ATP synthase epsilon chain (133 aa).

Belongs to the ATPase epsilon chain family. As to quaternary structure, F-type ATPases have 2 components, CF(1) - the catalytic core - and CF(0) - the membrane proton channel. CF(1) has five subunits: alpha(3), beta(3), gamma(1), delta(1), epsilon(1). CF(0) has three main subunits: a, b and c.

The protein localises to the cell membrane. In terms of biological role, produces ATP from ADP in the presence of a proton gradient across the membrane. The polypeptide is ATP synthase epsilon chain (Clostridium botulinum (strain Langeland / NCTC 10281 / Type F)).